A 103-amino-acid polypeptide reads, in one-letter code: Large ribosomal subunit protein bL21 (103 aa).

Belongs to the bacterial ribosomal protein bL21 family. As to quaternary structure, part of the 50S ribosomal subunit. Contacts protein L20.

Its function is as follows. This protein binds to 23S rRNA in the presence of protein L20. The protein is Large ribosomal subunit protein bL21 of Lactobacillus delbrueckii subsp. bulgaricus (strain ATCC 11842 / DSM 20081 / BCRC 10696 / JCM 1002 / NBRC 13953 / NCIMB 11778 / NCTC 12712 / WDCM 00102 / Lb 14).